The following is a 749-amino-acid chain: Protein kinase domain-containing protein ppk32 (749 aa).

Positions 21–317 (IQKENSVQVG…MFELERSPYF (297 aa)) constitute a Protein kinase domain. 2 disordered regions span residues 598–677 (KKLQ…VTAK) and 706–749 (PLIP…KSLL). Polar residues predominate over residues 602–651 (SKPSSVVPNRITTDPFSSQTKEATSKPSSISPNKATTNIFTSQASLSSQG). At Ser632 the chain carries Phosphoserine. Low complexity-rich tracts occupy residues 657–670 (SSAS…QRAS) and 721–735 (NRRV…NTVT).

It localises to the cytoplasm. This Schizosaccharomyces pombe (strain 972 / ATCC 24843) (Fission yeast) protein is Protein kinase domain-containing protein ppk32 (ppk32).